We begin with the raw amino-acid sequence, 790 residues long: PGC-1 and ERR-induced regulator in muscle protein 1 (790 aa).

Disordered regions lie at residues 38–391, 425–449, 507–545, and 626–648; these read LLSS…TPIS, VASS…STPV, SVAG…EAVA, and QRSR…APIP. Positions 40–52 are enriched in low complexity; that stretch reads SSDIDQGDSSGSS. Polar residues-rich tracts occupy residues 80–89 and 98–107; these read ATQQPVSRSQ and TGQQTPSTSA. Positions 111 to 123 are enriched in low complexity; sequence APPSLGPGASPPS. Pro residues predominate over residues 146–157; sequence APRPPGEPPGSP. Residues 158-169 are compositionally biased toward low complexity; sequence KSPGHSTGSQRP. The span at 170-179 shows a compositional bias: pro residues; the sequence is PDSPGAPPRS. The span at 366-391 shows a compositional bias: polar residues; sequence KPQSDTAVSTPASEPQSSVALSTPIS. Polar residues predominate over residues 515-532; the sequence is KPGSGQASARPSAPQTAT. Positions 635–648 are enriched in pro residues; sequence EPLPRADPVPAPIP.

In terms of tissue distribution, muscle-specific expression is increased by endurance exercise.

The protein localises to the cytoplasm. The protein resides in the nucleus. In terms of biological role, regulates the expression of selective PPARGC1A/B and ESRRA/B/G target genes with roles in glucose and lipid metabolism, energy transfer, contractile function, muscle mitochondrial biogenesis and oxidative capacity. Required for the efficient induction of MT-CO2, MT-CO3, COX4I1, TFB1M, TFB2M, POLRMT and SIRT3 by PPARGC1A. Positively regulates the PPARGC1A/ESRRG-induced expression of CKMT2, TNNI3 and SLC2A4 and negatively regulates the PPARGC1A/ESRRG-induced expression of PDK4. This Homo sapiens (Human) protein is PGC-1 and ERR-induced regulator in muscle protein 1 (PERM1).